Reading from the N-terminus, the 74-residue chain is Benzylsuccinate synthase beta subunit (74 aa).

In terms of assembly, heterohexamer composed of 2 alpha subunits, 2 beta subunits and 2 gamma subunits.

It carries out the reaction toluene + fumarate = 2-benzylsuccinate. It functions in the pathway xenobiotic degradation; toluene degradation. Its activity is regulated as follows. Activated by the benzylsuccinate synthase activating enzyme BssD. Rapidly inactivated by oxygen. Catalyzes the addition of fumarate to the methyl group of toluene, leading to the formation of benzylsuccinate. The sequence is that of Benzylsuccinate synthase beta subunit (bssB) from Thauera aromatica.